We begin with the raw amino-acid sequence, 216 residues long: Ribosomal RNA small subunit methyltransferase G (216 aa).

S-adenosyl-L-methionine is bound by residues Gly-81, Leu-86, 132–133 (VE), and Arg-147.

The protein belongs to the methyltransferase superfamily. RNA methyltransferase RsmG family.

The protein localises to the cytoplasm. It catalyses the reaction guanosine(527) in 16S rRNA + S-adenosyl-L-methionine = N(7)-methylguanosine(527) in 16S rRNA + S-adenosyl-L-homocysteine. Functionally, specifically methylates the N7 position of guanine in position 527 of 16S rRNA. In Hydrogenovibrio crunogenus (strain DSM 25203 / XCL-2) (Thiomicrospira crunogena), this protein is Ribosomal RNA small subunit methyltransferase G.